Here is a 196-residue protein sequence, read N- to C-terminus: Probable signal peptidase I-1 (196 aa).

Residues Met1 to Asn16 are Cytoplasmic-facing. Residues Ile17–Ala35 form a helical membrane-spanning segment. Topologically, residues Glu36–Thr196 are periplasmic. Active-site residues include Ser44 and Lys94.

Belongs to the peptidase S26 family.

The protein localises to the cell membrane. It catalyses the reaction Cleavage of hydrophobic, N-terminal signal or leader sequences from secreted and periplasmic proteins.. The chain is Probable signal peptidase I-1 (lepB1) from Synechocystis sp. (strain ATCC 27184 / PCC 6803 / Kazusa).